Here is a 209-residue protein sequence, read N- to C-terminus: Glycerol-3-phosphate acyltransferase (209 aa).

5 consecutive transmembrane segments (helical) span residues isoleucine 5–glycine 25, leucine 50–alanine 70, tyrosine 74–glycine 94, isoleucine 115–leucine 135, and alanine 151–leucine 171.

This sequence belongs to the PlsY family. As to quaternary structure, probably interacts with PlsX.

It is found in the cell membrane. The catalysed reaction is an acyl phosphate + sn-glycerol 3-phosphate = a 1-acyl-sn-glycero-3-phosphate + phosphate. It participates in lipid metabolism; phospholipid metabolism. Catalyzes the transfer of an acyl group from acyl-phosphate (acyl-PO(4)) to glycerol-3-phosphate (G3P) to form lysophosphatidic acid (LPA). This enzyme utilizes acyl-phosphate as fatty acyl donor, but not acyl-CoA or acyl-ACP. This is Glycerol-3-phosphate acyltransferase from Limosilactobacillus reuteri (strain DSM 20016) (Lactobacillus reuteri).